The chain runs to 1119 residues: DNA-directed RNA polymerase D subunit 2b (1119 aa).

Residue Asp732 participates in Mg(2+) binding. Zn(2+)-binding residues include Cys1055, Cys1058, Cys1080, and Cys1083. The C4-type zinc-finger motif lies at 1055–1083; sequence CRKCKTYANVIERTPSSGRKIRGPYCRVC.

Belongs to the RNA polymerase beta chain family. As to quaternary structure, component of the RNA polymerase IVa and IVb (Pol IV) complexes.

Its subcellular location is the nucleus. The catalysed reaction is RNA(n) + a ribonucleoside 5'-triphosphate = RNA(n+1) + diphosphate. DNA-dependent RNA polymerase catalyzes the transcription of DNA into RNA using the four ribonucleoside triphosphates as substrates. Second largest component of RNA polymerase IVa and IVb which mediate short-interfering RNAs (siRNA) accumulation and subsequent RNA-directed DNA methylation-dependent (RdDM) silencing of endogenous repeated sequences, including transposable largest subunit. Also required for full erasure of methylation elements. Required for intercellular RNA interference (RNAi) leading to systemic post-transcriptional gene silencing. This is DNA-directed RNA polymerase D subunit 2b (NRPD2b) from Arabidopsis thaliana (Mouse-ear cress).